Here is a 369-residue protein sequence, read N- to C-terminus: Glutamate 5-kinase (369 aa).

Lysine 9 contacts ATP. The substrate site is built by serine 49, aspartate 136, and asparagine 148. Residues 168 to 169 and 210 to 216 each bind ATP; these read TD and TGGMLTK. A PUA domain is found at 275-355; it reads QGSIWVDKGA…KGVLIYRDDW (81 aa).

It belongs to the glutamate 5-kinase family.

It localises to the cytoplasm. It carries out the reaction L-glutamate + ATP = L-glutamyl 5-phosphate + ADP. It functions in the pathway amino-acid biosynthesis; L-proline biosynthesis; L-glutamate 5-semialdehyde from L-glutamate: step 1/2. Functionally, catalyzes the transfer of a phosphate group to glutamate to form L-glutamate 5-phosphate. This Streptococcus pneumoniae (strain Hungary19A-6) protein is Glutamate 5-kinase.